The primary structure comprises 637 residues: DNA damage-binding protein CMR1 (637 aa).

Disordered stretches follow at residues 1–91 (MIES…EEEA) and 144–168 (LVDT…TERR). Composition is skewed to basic and acidic residues over residues 8–23 (EQER…RLMK) and 74–91 (AGHE…EEEA). WD repeat units lie at residues 185 to 226 (VTPK…FASN), 255 to 295 (HARS…SEEI), 297 to 321 (AGEE…VYMD), 361 to 401 (VCEK…SVVK), and 431 to 470 (KARQ…LFSE). Disordered stretches follow at residues 482-508 (SNKP…LSWL) and 525-549 (KQEQ…PTRI). WD repeat units follow at residues 556-598 (GKWL…LRSL) and 602-637 (NLVT…SPDP).

This sequence belongs to the WD repeat DDB2/WDR76 family.

DNA-binding protein that binds to both single- and double-stranded DNA. Binds preferentially to UV-damaged DNA. May be involved in DNA-metabolic processes. The polypeptide is DNA damage-binding protein CMR1 (Mycosarcoma maydis (Corn smut fungus)).